The following is a 326-amino-acid chain: N-acetyl-gamma-glutamyl-phosphate reductase (326 aa).

The active site involves cysteine 155.

The protein belongs to the NAGSA dehydrogenase family. Type 1 subfamily.

The protein resides in the cytoplasm. It carries out the reaction N-acetyl-L-glutamate 5-semialdehyde + phosphate + NADP(+) = N-acetyl-L-glutamyl 5-phosphate + NADPH + H(+). It participates in amino-acid biosynthesis; L-arginine biosynthesis; N(2)-acetyl-L-ornithine from L-glutamate: step 3/4. Its function is as follows. Catalyzes the NADPH-dependent reduction of N-acetyl-5-glutamyl phosphate to yield N-acetyl-L-glutamate 5-semialdehyde. The sequence is that of N-acetyl-gamma-glutamyl-phosphate reductase from Shewanella sediminis (strain HAW-EB3).